Reading from the N-terminus, the 240-residue chain is Probable transcriptional regulatory protein PBPRB1582 (240 aa).

Belongs to the TACO1 family.

It is found in the cytoplasm. In Photobacterium profundum (strain SS9), this protein is Probable transcriptional regulatory protein PBPRB1582.